We begin with the raw amino-acid sequence, 341 residues long: HTH-type transcriptional repressor PurR (341 aa).

The 55-residue stretch at 2–56 (ATIKDVAKRANVSTTTVSHVINKTRFVAEETRNAVWAAIKELHYSPSAVARSLKV) folds into the HTH lacI-type domain. A DNA-binding region (H-T-H motif) is located at residues 4–23 (IKDVAKRANVSTTTVSHVIN). Residues 48–56 (SAVARSLKV) mediate DNA binding. 5 residues coordinate hypoxanthine: Tyr73, Arg190, Thr192, Phe221, and Asp275.

In terms of assembly, homodimer.

The protein operates within purine metabolism; purine nucleotide biosynthesis [regulation]. Is the main repressor of the genes involved in the de novo synthesis of purine nucleotides, regulating purB, purC, purEK, purF, purHD, purL, purMN and guaBA expression. PurR is allosterically activated to bind its cognate DNA by binding the purine corepressors, hypoxanthine or guanine, thereby effecting transcription repression. The sequence is that of HTH-type transcriptional repressor PurR from Salmonella typhimurium (strain LT2 / SGSC1412 / ATCC 700720).